Here is a 33-residue protein sequence, read N- to C-terminus: Brevinin-2PTb (33 aa).

Cysteines 27 and 33 form a disulfide.

In terms of tissue distribution, expressed by the skin glands.

It is found in the secreted. Has antibacterial activity against the Gram-positive bacterium S.aureus ATCC 25923 (MIC=9 uM) and the Gram-negative bacterium E.coli ATCC 25726 (MIC=9 uM). This Pulchrana picturata (Malaysian fire frog) protein is Brevinin-2PTb.